The sequence spans 175 residues: Major MR/P fimbria protein (175 aa).

The N-terminal stretch at 1 to 23 is a signal peptide; that stretch reads MKLNKLALVLGLGLSVVAGSALA. Cysteine 42 and cysteine 81 are joined by a disulfide.

It belongs to the fimbrial protein family.

It is found in the fimbrium. Its function is as follows. Major structural component of mannose-resistant/proteus-like fimbriae of P.mirabilis. The protein is Major MR/P fimbria protein (mrpA) of Proteus mirabilis (strain HI4320).